A 93-amino-acid chain; its full sequence is Small ribosomal subunit protein uS19 (93 aa).

The protein belongs to the universal ribosomal protein uS19 family.

Functionally, protein S19 forms a complex with S13 that binds strongly to the 16S ribosomal RNA. This Campylobacter fetus subsp. fetus (strain 82-40) protein is Small ribosomal subunit protein uS19.